We begin with the raw amino-acid sequence, 189 residues long: Protein C1orf43 homolog (189 aa).

A helical membrane pass occupies residues 11-31 (VNVVLVMAYGSLVFVLLFIFV).

It localises to the membrane. The protein resides in the golgi apparatus. Its subcellular location is the mitochondrion. Functionally, general regulator of phagocytosis. Required to uptake Gram negative bacterium by macrophages. The sequence is that of Protein C1orf43 homolog from Pongo abelii (Sumatran orangutan).